The chain runs to 506 residues: Maturase K (506 aa).

The protein belongs to the intron maturase 2 family. MatK subfamily.

It is found in the plastid. It localises to the chloroplast. Usually encoded in the trnK tRNA gene intron. Probably assists in splicing its own and other chloroplast group II introns. The polypeptide is Maturase K (Phyllodoce caerulea (Blue mountain heath)).